The sequence spans 298 residues: MGNLKKLLRVSDLSDEDVENLLILANKYMAQEASDEVLRGKVIVNLFFESSTRTLLAFEIAEKALGAISVTLNVAMSSICKGESISDTMSTMAAMGTDLVVVRSDQSCMVDEIAKRAGDCLVINAGDGNHEHPTQAITDYATIRSLKGGEVRGLKVAICGDVFHSRVARSNIRLLSRYGADIRVVTPMRVDHVPDGVSLVTRSLEEGIEGADVIMLLRIQRERMTNGDFMLDKEYSRLYMLDEKRLSLAKDDVIVMHPGPMNRGVEISDEVADNHSSVLFQVKVGAAVRKAVLHYMLG.

R53 and T54 together coordinate carbamoyl phosphate. K81 contacts L-aspartate. Carbamoyl phosphate is bound by residues R103, H132, and Q135. The L-aspartate site is built by R166 and R218. Residues G259 and P260 each contribute to the carbamoyl phosphate site.

The protein belongs to the aspartate/ornithine carbamoyltransferase superfamily. ATCase family. Heterododecamer (2C3:3R2) of six catalytic PyrB chains organized as two trimers (C3), and six regulatory PyrI chains organized as three dimers (R2).

The enzyme catalyses carbamoyl phosphate + L-aspartate = N-carbamoyl-L-aspartate + phosphate + H(+). It participates in pyrimidine metabolism; UMP biosynthesis via de novo pathway; (S)-dihydroorotate from bicarbonate: step 2/3. Functionally, catalyzes the condensation of carbamoyl phosphate and aspartate to form carbamoyl aspartate and inorganic phosphate, the committed step in the de novo pyrimidine nucleotide biosynthesis pathway. The sequence is that of Aspartate carbamoyltransferase catalytic subunit from Anaplasma marginale (strain St. Maries).